The chain runs to 368 residues: Cobalt-precorrin-5B C(1)-methyltransferase (368 aa).

Belongs to the CbiD family.

The catalysed reaction is Co-precorrin-5B + S-adenosyl-L-methionine = Co-precorrin-6A + S-adenosyl-L-homocysteine. Its pathway is cofactor biosynthesis; adenosylcobalamin biosynthesis; cob(II)yrinate a,c-diamide from sirohydrochlorin (anaerobic route): step 6/10. In terms of biological role, catalyzes the methylation of C-1 in cobalt-precorrin-5B to form cobalt-precorrin-6A. The polypeptide is Cobalt-precorrin-5B C(1)-methyltransferase (Brucella abortus (strain S19)).